A 105-amino-acid polypeptide reads, in one-letter code: Endoribonuclease MazF1 (105 aa).

Belongs to the PemK/MazF family. Forms a complex with cognate antitoxin MazE1.

Functionally, toxic component of a type II toxin-antitoxin (TA) system. Acts as an endoribonuclease on single-strand RNA, cleaving between the first and second bases in the sequence UCGCU. Neutralized by coexpression with cognate antitoxin MazE1. The sequence is that of Endoribonuclease MazF1 (mazF1) from Mycobacterium bovis (strain ATCC BAA-935 / AF2122/97).